A 354-amino-acid polypeptide reads, in one-letter code: Histone-lysine N-methyltransferase SUVR3 (354 aa).

One can recognise a Pre-SET domain in the interval 143-188; the sequence is SGCECERCEEGYCKCLAFAGMEEIANECGSGCGCGSDCSNRVTQKG. Zn(2+)-binding residues include Cys-145, Cys-147, Cys-150, Cys-155, Cys-157, Cys-170, Cys-174, Cys-176, and Cys-180. Residues 191–323 enclose the SET domain; that stretch reads VSLKIVRDEK…AEEELSFSYG (133 aa). S-adenosyl-L-methionine-binding positions include 201 to 203 and 281 to 282; these read KGW and NH. Cys-284 contacts Zn(2+). Tyr-322 is an S-adenosyl-L-methionine binding site. Positions 334–350 constitute a Post-SET domain; that stretch reads DKLNCSCGSSCCLGTLP. Zn(2+) contacts are provided by Cys-338, Cys-340, and Cys-345.

It belongs to the class V-like SAM-binding methyltransferase superfamily.

The protein localises to the nucleus. It is found in the chromosome. It carries out the reaction L-lysyl-[histone] + S-adenosyl-L-methionine = N(6)-methyl-L-lysyl-[histone] + S-adenosyl-L-homocysteine + H(+). Its function is as follows. Histone methyltransferase. This Arabidopsis thaliana (Mouse-ear cress) protein is Histone-lysine N-methyltransferase SUVR3 (SUVR3).